Consider the following 325-residue polypeptide: Probable cell division protein WhiA (325 aa).

Residues 280–313 (SLKELGNMLEKPLGKSGVNHRLRKIDKIAEELRK) constitute a DNA-binding region (H-T-H motif).

It belongs to the WhiA family.

In terms of biological role, involved in cell division and chromosome segregation. This Caldicellulosiruptor bescii (strain ATCC BAA-1888 / DSM 6725 / KCTC 15123 / Z-1320) (Anaerocellum thermophilum) protein is Probable cell division protein WhiA.